A 285-amino-acid polypeptide reads, in one-letter code: uncharacterized protein (285 aa).

The Guanylate cyclase domain maps to 92–199 (TLLLADVEES…PTINRTARLR (108 aa)).

This sequence belongs to the adenylyl cyclase class-4/guanylyl cyclase family.

This is an uncharacterized protein from Mycobacterium tuberculosis (strain CDC 1551 / Oshkosh).